The chain runs to 424 residues: Tyrosine--tRNA ligase (424 aa).

Y37 serves as a coordination point for L-tyrosine. The 'HIGH' region motif lies at 42–51 (PTADSLHLGH). K144 is subject to N6-acetyllysine. Residues Y175 and Q179 each contribute to the L-tyrosine site. Positions 235 to 239 (KFGKT) match the 'KMSKS' region motif. K238 is a binding site for ATP. One can recognise an S4 RNA-binding domain in the interval 357-414 (ADLMQALVDSELQPSRGQARKTIASNAITINGEKQSDPEYFFKEEDRLFGRFTLLRRG).

Belongs to the class-I aminoacyl-tRNA synthetase family. TyrS type 1 subfamily. Homodimer.

The protein resides in the cytoplasm. The catalysed reaction is tRNA(Tyr) + L-tyrosine + ATP = L-tyrosyl-tRNA(Tyr) + AMP + diphosphate + H(+). In terms of biological role, catalyzes the attachment of tyrosine to tRNA(Tyr) in a two-step reaction: tyrosine is first activated by ATP to form Tyr-AMP and then transferred to the acceptor end of tRNA(Tyr). This chain is Tyrosine--tRNA ligase, found in Shigella dysenteriae serotype 1 (strain Sd197).